The following is a 202-amino-acid chain: 3-isopropylmalate dehydratase small subunit 1 (202 aa).

The protein belongs to the LeuD family. LeuD type 1 subfamily. In terms of assembly, heterodimer of LeuC and LeuD.

The catalysed reaction is (2R,3S)-3-isopropylmalate = (2S)-2-isopropylmalate. It participates in amino-acid biosynthesis; L-leucine biosynthesis; L-leucine from 3-methyl-2-oxobutanoate: step 2/4. Functionally, catalyzes the isomerization between 2-isopropylmalate and 3-isopropylmalate, via the formation of 2-isopropylmaleate. In Bordetella pertussis (strain Tohama I / ATCC BAA-589 / NCTC 13251), this protein is 3-isopropylmalate dehydratase small subunit 1.